The chain runs to 389 residues: GTPase Obg (389 aa).

In terms of domain architecture, Obg spans 1–159; that stretch reads MKFVDEAVIK…RELRLELLLL (159 aa). An OBG-type G domain is found at 160-333; that stretch reads ADVGMLGLPN…LCYKLADFME (174 aa). GTP-binding positions include 166 to 173, 191 to 195, 213 to 216, 283 to 286, and 314 to 316; these read GLPNAGKS, FTTLI, DIPG, NKVD, and SAV. Positions 173 and 193 each coordinate Mg(2+). A disordered region spans residues 359 to 389; it reads NQGEVITEDDDDDWDDWDDEEDDGHVIYVRE. Over residues 364-381 the composition is skewed to acidic residues; that stretch reads ITEDDDDDWDDWDDEEDD.

The protein belongs to the TRAFAC class OBG-HflX-like GTPase superfamily. OBG GTPase family. Monomer. Requires Mg(2+) as cofactor.

It is found in the cytoplasm. An essential GTPase which binds GTP, GDP and possibly (p)ppGpp with moderate affinity, with high nucleotide exchange rates and a fairly low GTP hydrolysis rate. Plays a role in control of the cell cycle, stress response, ribosome biogenesis and in those bacteria that undergo differentiation, in morphogenesis control. This Vibrio vulnificus (strain CMCP6) protein is GTPase Obg.